A 544-amino-acid polypeptide reads, in one-letter code: Bacillolysin (544 aa).

An N-terminal signal peptide occupies residues 1–25; it reads MNKRAMLGAIGLAFGLMAWPFGASA. The propeptide at 26-225 is activation peptide; sequence KGKSMVWNEQ…DEAKPGGAQP (200 aa). Ca(2+)-binding residues include aspartate 285, aspartate 287, glutamine 289, and aspartate 366. Histidine 370 is a binding site for Zn(2+). Glutamate 371 is an active-site residue. Zn(2+) is bound by residues histidine 374 and glutamate 394. Ca(2+)-binding residues include glutamate 405, asparagine 411, aspartate 413, glutamate 415, glutamate 418, tyrosine 421, threonine 422, valine 425, and aspartate 428. Histidine 459 functions as the Proton donor in the catalytic mechanism.

This sequence belongs to the peptidase M4 family. Ca(2+) is required as a cofactor. Zn(2+) serves as cofactor.

Its subcellular location is the secreted. The catalysed reaction is Similar, but not identical, to that of thermolysin.. Extracellular zinc metalloprotease. The chain is Bacillolysin (npr) from Bacillus caldolyticus.